Here is a 481-residue protein sequence, read N- to C-terminus: 3-ketoacyl-CoA synthase 8 (481 aa).

The next 2 membrane-spanning stretches (helical) occupy residues 4-24 (LKMV…AMKG) and 44-64 (LQTI…YMLT). One can recognise an FAE domain in the interval 61 to 358 (YMLTRPKPVY…FFITFVKKKY (298 aa)). Active-site residues include Cys-213, His-292, His-376, His-380, His-409, and Asn-413.

The protein belongs to the thiolase-like superfamily. Chalcone/stilbene synthases family. In terms of tissue distribution, expressed in leaves and seedlings.

It is found in the endoplasmic reticulum membrane. It carries out the reaction a very-long-chain acyl-CoA + malonyl-CoA + H(+) = a very-long-chain 3-oxoacyl-CoA + CO2 + CoA. It functions in the pathway lipid metabolism; fatty acid biosynthesis. The chain is 3-ketoacyl-CoA synthase 8 from Arabidopsis thaliana (Mouse-ear cress).